Reading from the N-terminus, the 538-residue chain is MKQSSPEPLRPRRTGGRGGARRAAALVTIPLLPMTLLGASPALADASGARLTELREDIDAILEDPALEGAVSGVVVVDTATGEELYSRDGGEQLLPASNMKLFTAAAALEVLGADHSFGTEVAAESAPGRRGEVQDLYLVGRGDPTLSAEDLDAMAAEVAASGVRTVRGDLYADDTWFDSERLVDDWWPEDEPYAYSAQISALTVAHGERFDTGVTEVSVTPAAEGEPADVDLGAAEGYAELDNRAVTGAAGSANTLVIDRPVGTNTIAVTGSLPADAAPVTALRTVDEPAALAGHLFEEALESNGVTVKGDVGLGGVPADWQDAEVLADHTSAELSEILVPFMKFSNNGHAEMLVKSIGQETAGAGTWDAGLVGVEEALSGLGVDTAGLVLNDGSGLSRGNLVTADTVVDLLGQAGSAPWAQTWSASLPVAGESDPFVGGTLANRMRGTAAEGVVEAKTGTMSGVSALSGYVPGPEGELAFSIVNNGHSGPAPLAVQDAIAVRLAEYAGHQAPEGARMMRGPVQGSGELECSWVQAC.

The disordered stretch occupies residues 1–21 (MKQSSPEPLRPRRTGGRGGAR). A signal peptide spans 1-49 (MKQSSPEPLRPRRTGGRGGARRAAALVTIPLLPMTLLGASPALADASGA). The active-site Acyl-ester intermediate is the Ser98. The active-site Proton acceptor is Lys101. An absent in class-A beta-lactamases region spans residues 146–319 (TLSAEDLDAM…KGDVGLGGVP (174 aa)). Ser347 is a catalytic residue. Lys459 is a substrate binding site. Residues 516-538 (GARMMRGPVQGSGELECSWVQAC) constitute a propeptide, removed in mature form.

The protein belongs to the peptidase S13 family.

It is found in the secreted. The enzyme catalyses Preferential cleavage: (Ac)2-L-Lys-D-Ala-|-D-Ala. Also transpeptidation of peptidyl-alanyl moieties that are N-acyl substituents of D-alanine.. It functions in the pathway cell wall biogenesis; peptidoglycan biosynthesis. With respect to regulation, inhibited by benzylpenicillin, cephaloridine, ampicillin and cetiofur. Removes C-terminal D-alanyl residues from sugar-peptide cell wall precursors. This is D-alanyl-D-alanine carboxypeptidase (dac) from Actinomadura sp. (strain R39).